The sequence spans 617 residues: Chaperone protein HscA homolog (617 aa).

Belongs to the heat shock protein 70 family.

Chaperone involved in the maturation of iron-sulfur cluster-containing proteins. Has a low intrinsic ATPase activity which is markedly stimulated by HscB. The polypeptide is Chaperone protein HscA homolog (Actinobacillus pleuropneumoniae serotype 5b (strain L20)).